Consider the following 434-residue polypeptide: Glutamate-1-semialdehyde 2,1-aminomutase (434 aa).

Lys274 is modified (N6-(pyridoxal phosphate)lysine).

The protein belongs to the class-III pyridoxal-phosphate-dependent aminotransferase family. HemL subfamily. As to quaternary structure, homodimer. The cofactor is pyridoxal 5'-phosphate.

The protein resides in the cytoplasm. It catalyses the reaction (S)-4-amino-5-oxopentanoate = 5-aminolevulinate. The protein operates within porphyrin-containing compound metabolism; protoporphyrin-IX biosynthesis; 5-aminolevulinate from L-glutamyl-tRNA(Glu): step 2/2. This chain is Glutamate-1-semialdehyde 2,1-aminomutase, found in Acidovorax ebreus (strain TPSY) (Diaphorobacter sp. (strain TPSY)).